The chain runs to 132 residues: Aspartate 1-decarboxylase (132 aa).

Residue serine 25 is the Schiff-base intermediate with substrate; via pyruvic acid of the active site. Residue serine 25 is modified to Pyruvic acid (Ser). Threonine 57 is a binding site for substrate. The active-site Proton donor is the tyrosine 58. 73 to 75 (GAA) lines the substrate pocket.

Belongs to the PanD family. As to quaternary structure, heterooctamer of four alpha and four beta subunits. The cofactor is pyruvate. Is synthesized initially as an inactive proenzyme, which is activated by self-cleavage at a specific serine bond to produce a beta-subunit with a hydroxyl group at its C-terminus and an alpha-subunit with a pyruvoyl group at its N-terminus.

The protein localises to the cytoplasm. It catalyses the reaction L-aspartate + H(+) = beta-alanine + CO2. It participates in cofactor biosynthesis; (R)-pantothenate biosynthesis; beta-alanine from L-aspartate: step 1/1. Its function is as follows. Catalyzes the pyruvoyl-dependent decarboxylation of aspartate to produce beta-alanine. The chain is Aspartate 1-decarboxylase from Heliobacterium modesticaldum (strain ATCC 51547 / Ice1).